We begin with the raw amino-acid sequence, 193 residues long: 3-isopropylmalate dehydratase small subunit (193 aa).

The protein belongs to the LeuD family. LeuD type 1 subfamily. Heterodimer of LeuC and LeuD.

The catalysed reaction is (2R,3S)-3-isopropylmalate = (2S)-2-isopropylmalate. It participates in amino-acid biosynthesis; L-leucine biosynthesis; L-leucine from 3-methyl-2-oxobutanoate: step 2/4. Its function is as follows. Catalyzes the isomerization between 2-isopropylmalate and 3-isopropylmalate, via the formation of 2-isopropylmaleate. The polypeptide is 3-isopropylmalate dehydratase small subunit (Listeria monocytogenes serovar 1/2a (strain ATCC BAA-679 / EGD-e)).